Consider the following 175-residue polypeptide: Ribosome maturation factor RimM (175 aa).

Residues 96-175 form the PRC barrel domain; the sequence is EGDFYWHDLI…TIEVDWDAGF (80 aa).

It belongs to the RimM family. Binds ribosomal protein uS19.

The protein resides in the cytoplasm. In terms of biological role, an accessory protein needed during the final step in the assembly of 30S ribosomal subunit, possibly for assembly of the head region. Essential for efficient processing of 16S rRNA. May be needed both before and after RbfA during the maturation of 16S rRNA. It has affinity for free ribosomal 30S subunits but not for 70S ribosomes. The chain is Ribosome maturation factor RimM from Histophilus somni (strain 129Pt) (Haemophilus somnus).